A 195-amino-acid polypeptide reads, in one-letter code: Interferon tau-5 (195 aa).

Positions 1–23 (MAFVLSLLMALVLVSYGPGGSLG) are cleaved as a signal peptide. Cystine bridges form between Cys-24/Cys-122 and Cys-52/Cys-162.

This sequence belongs to the alpha/beta interferon family. IFN-alphaII subfamily. In terms of tissue distribution, constitutively and exclusively expressed in the mononuclear cells of the extraembryonic trophectoderm.

The protein resides in the secreted. Functionally, paracrine hormone primarily responsible for maternal recognition of pregnancy. Interacts with endometrial receptors, probably type I interferon receptors, and blocks estrogen receptor expression, preventing the estrogen-induced increase in oxytocin receptor expression in the endometrium. This results in the suppression of the pulsatile endometrial release of the luteolytic hormone prostaglandin F2-alpha, hindering the regression of the corpus luteum (luteolysis) and therefore a return to ovarian cyclicity. This, and a possible direct effect of IFN-tau on prostaglandin synthesis, leads in turn to continued ovarian progesterone secretion, which stimulates the secretion by the endometrium of the nutrients required for the growth of the conceptus. In summary, displays particularly high antiviral and antiproliferative potency concurrently with particular weak cytotoxicity, high antiluteolytic activity and immunomodulatory properties. In contrast with other IFNs, IFN-tau is not virally inducible. The protein is Interferon tau-5 (IFNT5) of Ovis aries (Sheep).